We begin with the raw amino-acid sequence, 304 residues long: DCN1-like protein 3 (304 aa).

Disordered regions lie at residues 1–86 (MGQC…AEES) and 284–304 (EGEG…EEQT). Glycine 2 is lipidated: N-myristoyl glycine. The DCUN1 domain occupies 86 to 278 (SSLQRLEELF…LFDTFVEWEM (193 aa)).

Part of a complex containing DCUN1D3, CUL3 and RBX1. Interacts (via the DCUN1 domain) with the unneddylated cullins: interacts with CUL1, CUL2, CUL3, CUL4A, CUL4B and CUL5; these interactions promote the cullin neddylation and the identity of the cullin dictates the affinity of the interaction. Interacts preferentially with CUL3; this interaction triggers the relocalization of CUL3 to the cell membrane where CUL3 is neddylated. Interacts (via DCUN1 domain) with RBX1. May also interact with regulators or subunits of cullin-RING ligases such as RNF7, ELOB and DDB1; these interactions are bridged by cullins. Interacts (via DCUN1 domain) with CAND1; this interaction is bridged by cullins and strongly inhibits cullin neddylation. These CAND-cullin-DCNL complexes can only be neddylated in the presence of a substrate adapter. Interacts (via DCUN1 domain) with the N-terminally acetylated form of UBE2M and UBE2F. As to expression, tends to be down-regulated in different type of cancers, including lung neuroendocrine carcinoma, thyroid Huerthle cell carcinoma and lung squamous cell carcinoma. Mostly expressed in testis and brain. Highly expressed in liver, bladder and renal normal tissue than their tumor tissue counterparts. Palmitoylation stabilizes DCUN1D3 at the cell membrane.

The protein localises to the cell membrane. The protein resides in the cytoplasm. It localises to the nucleus. Its subcellular location is the perinuclear region. Contributes to the neddylation of all cullins by transferring NEDD8 from N-terminally acetylated NEDD8-conjugating E2s enzyme to different cullin C-terminal domain-RBX complexes and may play a role in the cell cycle progression by regulating the SCF ubiquitin E3 ligase complex, after UV damage. At the cell membrane, can promote and as well inhibit cullins neddylation. The sequence is that of DCN1-like protein 3 from Homo sapiens (Human).